Reading from the N-terminus, the 397-residue chain is MNENIAEKFRADGVARPNWSAVFAVAFCVACLITVEFLPVSLLTPMAQDLGISEGVAGQSVTVTAFVAMFSSLFITQIIQATDRRYIVILFAVLLTASCLMVSFANSFTLLLLGRACLGLALGGFWAMSASLTMRLVPARTVPKALSVIFGAVSIALVIAAPLGSFLGGIIGWRNVFNAAAVMGVLCVIWVVKSLPSLPGEPSHQKQNMFSLLQRPGVMAGMIAIFMSFAGQFAFFTYIRPVYMNLAGFDVDGLTLVLLSFGIASFVGTSFSSYVLKRSVKLALAGAPLLLALSALTLIVWGSDKTVAAAIAIIWGLAFALVPVGWSTWITRSLADQAEKAGSIQVAVIQLANTCGAAVGGYALDNFGLLSPLALSGGLMLLTALVVAAKVRITPMS.

Residues 1–21 are Cytoplasmic-facing; that stretch reads MNENIAEKFRADGVARPNWSA. A helical transmembrane segment spans residues 22 to 42; the sequence is VFAVAFCVACLITVEFLPVSL. Residues 43-54 lie on the Periplasmic side of the membrane; the sequence is LTPMAQDLGISE. A helical transmembrane segment spans residues 55-75; that stretch reads GVAGQSVTVTAFVAMFSSLFI. Residues 76-85 are Cytoplasmic-facing; that stretch reads TQIIQATDRR. The helical transmembrane segment at 86–106 threads the bilayer; the sequence is YIVILFAVLLTASCLMVSFAN. Residue Ser-107 is a topological domain, periplasmic. The helical transmembrane segment at 108 to 128 threads the bilayer; it reads FTLLLLGRACLGLALGGFWAM. Residues 129 to 147 lie on the Cytoplasmic side of the membrane; the sequence is SASLTMRLVPARTVPKALS. Residues 148–168 traverse the membrane as a helical segment; it reads VIFGAVSIALVIAAPLGSFLG. At 169-175 the chain is on the periplasmic side; it reads GIIGWRN. A helical membrane pass occupies residues 176-196; it reads VFNAAAVMGVLCVIWVVKSLP. Residues 197–215 lie on the Cytoplasmic side of the membrane; that stretch reads SLPGEPSHQKQNMFSLLQR. A helical membrane pass occupies residues 216–236; sequence PGVMAGMIAIFMSFAGQFAFF. Topologically, residues 237–255 are periplasmic; sequence TYIRPVYMNLAGFDVDGLT. A helical membrane pass occupies residues 256–276; that stretch reads LVLLSFGIASFVGTSFSSYVL. Residues 277–281 lie on the Cytoplasmic side of the membrane; it reads KRSVK. A helical transmembrane segment spans residues 282–302; it reads LALAGAPLLLALSALTLIVWG. Topologically, residues 303–305 are periplasmic; that stretch reads SDK. A helical transmembrane segment spans residues 306–326; sequence TVAAAIAIIWGLAFALVPVGW. Topologically, residues 327 to 343 are cytoplasmic; it reads STWITRSLADQAEKAGS. The chain crosses the membrane as a helical span at residues 344–364; sequence IQVAVIQLANTCGAAVGGYAL. Topologically, residues 365–366 are periplasmic; it reads DN. The helical transmembrane segment at 367–387 threads the bilayer; that stretch reads FGLLSPLALSGGLMLLTALVV. Residues 388–397 lie on the Cytoplasmic side of the membrane; the sequence is AAKVRITPMS.

It belongs to the major facilitator superfamily. DHA1 family. NepI (TC 2.A.1.2.26) subfamily.

Its subcellular location is the cell inner membrane. It carries out the reaction inosine(in) + H(+)(out) = inosine(out) + H(+)(in). It catalyses the reaction guanosine(in) + H(+)(out) = guanosine(out) + H(+)(in). Functionally, involved in the efflux of purine ribonucleosides, such as inosine and guanosine. This is Purine ribonucleoside efflux pump NepI from Salmonella choleraesuis (strain SC-B67).